Here is a 71-residue protein sequence, read N- to C-terminus: Augerpeptide-s7a (71 aa).

A signal peptide spans Met1–Ile20. A propeptide spanning residues Pro21–Arg29 is cleaved from the precursor. Intrachain disulfides connect Cys36–Cys48, Cys42–Cys65, and Cys47–Cys68.

As to expression, expressed by the venom duct.

The protein localises to the secreted. In terms of biological role, elicits an uncoordinated twisting syndrome when injected into C.elegans, but has no effect on mice. This is Augerpeptide-s7a from Terebra subulata (Chocolate spotted auger).